A 206-amino-acid polypeptide reads, in one-letter code: Large ribosomal subunit protein uL4 (206 aa).

The tract at residues 47 to 79 is disordered; it reads GTKGQKNRSAVRGGGAKPWAQKGSGRARAGTSR. Residues 69-79 are compositionally biased toward low complexity; it reads GSGRARAGTSR.

It belongs to the universal ribosomal protein uL4 family. As to quaternary structure, part of the 50S ribosomal subunit.

In terms of biological role, one of the primary rRNA binding proteins, this protein initially binds near the 5'-end of the 23S rRNA. It is important during the early stages of 50S assembly. It makes multiple contacts with different domains of the 23S rRNA in the assembled 50S subunit and ribosome. Its function is as follows. Forms part of the polypeptide exit tunnel. This Hydrogenovibrio crunogenus (strain DSM 25203 / XCL-2) (Thiomicrospira crunogena) protein is Large ribosomal subunit protein uL4.